The primary structure comprises 424 residues: UDP-N-acetylglucosamine 1-carboxyvinyltransferase (424 aa).

Residue 22–23 (KN) coordinates phosphoenolpyruvate. Residue Arg-98 coordinates UDP-N-acetyl-alpha-D-glucosamine. Cys-122 serves as the catalytic Proton donor. The residue at position 122 (Cys-122) is a 2-(S-cysteinyl)pyruvic acid O-phosphothioketal. Residues 127 to 131 (RPVDQ), Asp-312, and Ile-334 each bind UDP-N-acetyl-alpha-D-glucosamine.

The protein belongs to the EPSP synthase family. MurA subfamily.

The protein resides in the cytoplasm. It catalyses the reaction phosphoenolpyruvate + UDP-N-acetyl-alpha-D-glucosamine = UDP-N-acetyl-3-O-(1-carboxyvinyl)-alpha-D-glucosamine + phosphate. Its pathway is cell wall biogenesis; peptidoglycan biosynthesis. In terms of biological role, cell wall formation. Adds enolpyruvyl to UDP-N-acetylglucosamine. In Xanthomonas campestris pv. campestris (strain 8004), this protein is UDP-N-acetylglucosamine 1-carboxyvinyltransferase.